The chain runs to 124 residues: Ribosome-binding factor A (124 aa).

It belongs to the RbfA family. Monomer. Binds 30S ribosomal subunits, but not 50S ribosomal subunits or 70S ribosomes.

The protein resides in the cytoplasm. One of several proteins that assist in the late maturation steps of the functional core of the 30S ribosomal subunit. Associates with free 30S ribosomal subunits (but not with 30S subunits that are part of 70S ribosomes or polysomes). Required for efficient processing of 16S rRNA. May interact with the 5'-terminal helix region of 16S rRNA. This chain is Ribosome-binding factor A, found in Thiobacillus denitrificans (strain ATCC 25259 / T1).